The primary structure comprises 275 residues: Small ribosomal subunit protein uS2 (275 aa).

The tract at residues 232–256 (ARATDGKPEPEPVPGQELGADEPLA) is disordered.

Belongs to the universal ribosomal protein uS2 family.

This is Small ribosomal subunit protein uS2 from Acidothermus cellulolyticus (strain ATCC 43068 / DSM 8971 / 11B).